A 276-amino-acid polypeptide reads, in one-letter code: MSSNSDHHISVEHTDGVATIRFTRPSKHNAASAQLLLETLEALYRLESDDSVGAIVLTGEGAVFSAGFDLEEVPMGPASEIQSHFRLKALYYHAVIHMLARIEKPTLAAINGPAVGGGLGMSLACDLAVCTDRATFLPAWMSIGIANDASSSFYLPRIVGYRRAMEWLLTNRTLGADEAYEWGVVNRVFSEADFQSRVGEIARQLAAAPTHLQGLVKNRIQEGSSETLESCTEHEVQNVIASVGHPHFAERLAMFRSKEMRSSALAVDLDAVCGGR.

Residue 66–71 coordinates substrate; it reads AGFDLE. The active-site Proton acceptor is the histidine 93. Glycine 117 serves as a coordination point for substrate. Aspartate 148 functions as the Nucleophile in the catalytic mechanism. Position 261 (arginine 261) interacts with substrate.

It belongs to the enoyl-CoA hydratase/isomerase family. In terms of assembly, homotetramer.

The catalysed reaction is 4-chlorobenzoyl-CoA + H2O = 4-hydroxybenzoyl-CoA + chloride + H(+). The protein operates within xenobiotic degradation; 4-chlorobenzoate degradation; 4-hydroxybenzoate from 4-chlorobenzoate: step 2/3. Dehalogenates 4-chlorobenzoyl-CoA, 4-iodobenzoyl-CoA, 4-bromobenzoyl-CoA and, at a slower rate, 4-fluorobenzoyl-CoA. Does not dehalogenate 2-chlorobenzoyl-CoA or 3-chlorobenzoyl-CoA. The chain is 4-chlorobenzoyl coenzyme A dehalogenase-2 from Arthrobacter sp.